The chain runs to 341 residues: Phosphate acyltransferase (341 aa).

Belongs to the PlsX family. In terms of assembly, homodimer. Probably interacts with PlsY.

The protein resides in the cytoplasm. The catalysed reaction is a fatty acyl-[ACP] + phosphate = an acyl phosphate + holo-[ACP]. It participates in lipid metabolism; phospholipid metabolism. Functionally, catalyzes the reversible formation of acyl-phosphate (acyl-PO(4)) from acyl-[acyl-carrier-protein] (acyl-ACP). This enzyme utilizes acyl-ACP as fatty acyl donor, but not acyl-CoA. In Vibrio atlanticus (strain LGP32) (Vibrio splendidus (strain Mel32)), this protein is Phosphate acyltransferase.